We begin with the raw amino-acid sequence, 66 residues long: MSETNKNAFQAGQAAGKAEEKSNVLLDKAKDAAAAAGASAQQAGKSISDAAVGGVNFVKDKTGLNK.

The segment covering 1-10 has biased composition (polar residues); that stretch reads MSETNKNAFQ. The tract at residues 1–20 is disordered; sequence MSETNKNAFQAGQAAGKAEE. 2 consecutive repeats follow at residues 31–35 and 49–53; these read DAAAA and DAAVG.

As to quaternary structure, interacts with DEK3. As to expression, expressed at high levels in embryos and mature seeds.

This chain is Stress-induced protein KIN2, found in Arabidopsis thaliana (Mouse-ear cress).